The chain runs to 732 residues: Catalase-peroxidase (732 aa).

The segment covering 1–10 has biased composition (basic and acidic residues); that stretch reads MDAKTDDKAG. The tract at residues 1–26 is disordered; it reads MDAKTDDKAGKCPVAHGPAPRGNRDW. The segment at residues 95-217 is a cross-link (tryptophyl-tyrosyl-methioninium (Trp-Tyr) (with M-243)); it reads WHSAGTYRTT…LGAVQMGLIY (123 aa). The active-site Proton acceptor is the histidine 96. A cross-link (tryptophyl-tyrosyl-methioninium (Tyr-Met) (with W-95)) is located at residues 217-243; that stretch reads YVNPEGPNGNPDPLGSAKDIRETFARM. Histidine 258 is a heme b binding site.

Belongs to the peroxidase family. Peroxidase/catalase subfamily. In terms of assembly, homodimer or homotetramer. Requires heme b as cofactor. Post-translationally, formation of the three residue Trp-Tyr-Met cross-link is important for the catalase, but not the peroxidase activity of the enzyme.

It catalyses the reaction H2O2 + AH2 = A + 2 H2O. It carries out the reaction 2 H2O2 = O2 + 2 H2O. In terms of biological role, bifunctional enzyme with both catalase and broad-spectrum peroxidase activity. This chain is Catalase-peroxidase, found in Rhodopseudomonas palustris (strain BisB18).